Reading from the N-terminus, the 1453-residue chain is Collagen alpha-1(I) chain (1453 aa).

A signal peptide spans 1–22; it reads MFSFVDLRLLLLLGATALLTHG. Residues 23 to 151 constitute a propeptide, N-terminal propeptide; sequence QEDIPEVSCI…PPGLGGNFAS (129 aa). The 59-residue stretch at 29–87 folds into the VWFC domain; it reads VSCIHNGLRVPNGETWKPEVCLICICHNGTAVCDDVQCNEELDCPNPQRREGECCAFCP. N56 carries an N-linked (GlcNAc...) asparagine glycan. Residues 94–1210 are disordered; that stretch reads NSEDVGVEGP…GGRYYRADDA (1117 aa). Pro residues-rich tracts occupy residues 109–118 and 128–143; these read PQGPRGPVGP and PGLP…PGPP. Positions 152–167 are nonhelical region (N-terminal); sequence QMSYGYDEKSAGVSVP. K160 is subject to Allysine. At S161 the chain carries Phosphoserine. Positions 168 to 1181 are triple-helical region; the sequence is GPMGPSGPRG…PGPPGPPGPP (1014 aa). 11 positions are modified to 4-hydroxyproline: P179, P182, P185, P194, P197, P200, P215, P230, P236, P245, and P251. Residues 198 to 207 are compositionally biased toward gly residues; the sequence is GEPGGSGPMG. Residues 218–232 are compositionally biased toward basic and acidic residues; sequence NGDDGEAGKPGRPGE. K254 is modified (5-hydroxylysine; alternate). A glycan (O-linked (Gal...) hydroxylysine; alternate) is linked at K254. At S260 the chain carries Phosphoserine. Positions 268 to 284 are enriched in low complexity; that stretch reads DAGPAGPKGEPGSPGEN. 4-hydroxyproline occurs at positions 278, 281, 287, 296, and 302. The segment covering 307–320 has biased composition (low complexity); the sequence is TAGARGNDGAVGAA. The span at 322 to 334 shows a compositional bias: pro residues; it reads PPGPTGPTGPPGF. Residues P323, P332, P335, P362, P365, P377, P383, P392, P398, P401, and P416 each carry the 4-hydroxyproline modification. Low complexity predominate over residues 368–407; that stretch reads AGAAGPAGNPGADGQPGAKGANGAPGIAGAPGFPGARGPS. K419 carries the post-translational modification 5-hydroxylysine. 4-hydroxyproline is present on residues P425, P428, P440, P449, P464, P470, P479, and P485. Gly residues predominate over residues 474–483; the sequence is GERGGPGSRG. 5-hydroxylysine is present on K494. Low complexity predominate over residues 499-515; the sequence is ERGAPGPAGPKGSPGEA. 28 positions are modified to 4-hydroxyproline: P503, P512, P518, P524, P533, P536, P545, P554, P560, P572, P581, P590, P593, P611, P629, P635, P641, P647, P653, P659, P671, P680, P692, P704, P707, P713, P719, and P728. Residues 527-566 are compositionally biased toward low complexity; it reads KGLTGSPGSPGPDGKTGPPGPAGQDGRPGPAGPPGARGQA. The span at 623–650 shows a compositional bias: low complexity; that stretch reads QGPAGSPGFQGLPGPAGPPGEAGKPGEQ. Composition is skewed to low complexity over residues 685–695 and 703–716; these read PRGNNGAPGND and APGA…PGLQ. Positions 734–736 match the Cell attachment site motif; that stretch reads RGD. K740 is subject to 5-hydroxylysine. Residues P746, P761, and P767 each carry the 4-hydroxyproline modification. Residue S776 is modified to Phosphoserine. 7 positions are modified to 4-hydroxyproline: P788, P797, P806, P812, P830, P839, and P848. Over residues 800–815 the composition is skewed to low complexity; sequence AGFAGPPGADGQPGAK. The span at 829–841 shows a compositional bias: pro residues; it reads PPGPAGPAGPPGP. Positions 842-872 are enriched in low complexity; that stretch reads IGNVGAPGPKGPRGAAGPPGATGFPGAAGRV. The residue at position 851 (K851) is a 5-hydroxylysine. 4-hydroxyproline occurs at positions 860 and 866. A 3-hydroxyproline modification is found at P874. A 4-hydroxyproline mark is found at P875, P884, P887, P908, P917, P926, P935, P953, P962, P965, P971, P986, P992, P998, P1007, and P1013. Positions 901 to 910 are enriched in low complexity; sequence ETGPAGRPGE. Positions 920-935 are enriched in low complexity; it reads AGEKGSPGADGPAGSP. Positions 985-995 are enriched in pro residues; sequence PPGPMGPPGLA. Residues 997–1012 show a composition bias toward low complexity; it reads PPGESGREGSPGAEGS. K1022 bears the 5-hydroxylysine mark. The segment covering 1031–1046 has biased composition (pro residues); that stretch reads AGPPGAPGAPGAPGPV. Residues P1034, P1037, and P1040 each carry the 4-hydroxyproline modification. Residues 1067-1081 are compositionally biased toward low complexity; the sequence is IGPAGARGPAGPQGP. The Cell attachment site motif lies at 1082-1084; it reads RGD. Residues 1082 to 1096 are compositionally biased toward basic and acidic residues; sequence RGDKGETGEQGDRGI. K1085 bears the 5-hydroxylysine mark. K1097 is subject to 5-hydroxylysine; alternate. K1097 is a glycosylation site (O-linked (Gal...) hydroxylysine; alternate). Over residues 1102 to 1148 the composition is skewed to low complexity; that stretch reads FSGLQGPPGSPGSPGEQGPSGASGPAGPRGPPGSAGSPGKDGLNGLP. Residues P1109, P1112, P1115, P1133, and P1148 each carry the 4-hydroxyproline modification. P1153 carries the post-translational modification 3-hydroxyproline. P1154 carries the 4-hydroxyproline modification. Over residues 1166-1181 the composition is skewed to pro residues; it reads AGPPGPPGPPGPPGPP. The residue at position 1168 (P1168) is a 3-hydroxyproline. P1169 is subject to 4-hydroxyproline. P1171 carries the post-translational modification 3-hydroxyproline. At P1172 the chain carries 4-hydroxyproline. P1174 is subject to 3-hydroxyproline. 4-hydroxyproline occurs at positions 1175, 1178, and 1181. Positions 1182–1207 are nonhelical region (C-terminal); that stretch reads SGGYDFSFLPQPPQEKSQDGGRYYRA. K1197 carries the allysine modification. Residues 1197 to 1210 show a composition bias toward basic and acidic residues; it reads KSQDGGRYYRADDA. Positions 1208–1453 are cleaved as a propeptide — C-terminal propeptide; that stretch reads DDANVVRDRD…GLDIGPACFV (246 aa). Positions 1218 to 1453 constitute a Fibrillar collagen NC1 domain; that stretch reads LEVDTTLKSL…GLDIGPACFV (236 aa). Intrachain disulfides connect C1248–C1280, C1288–C1451, and C1359–C1404. Ca(2+)-binding residues include D1266, N1268, Q1269, C1271, and D1274. N1354 is a glycosylation site (N-linked (GlcNAc...) asparagine).

It belongs to the fibrillar collagen family. Trimers of one alpha 2(I) and two alpha 1(I) chains. Interacts with MRC2. Interacts with TRAM2. Interacts with MFAP4 in a Ca (2+)-dependent manner. Post-translationally, contains mostly 4-hydroxyproline. Proline residues at the third position of the tripeptide repeating unit (G-X-Y) are hydroxylated in some or all of the chains. In terms of processing, contains 3-hydroxyproline at a few sites. This modification occurs on the first proline residue in the sequence motif Gly-Pro-Hyp, where Hyp is 4-hydroxyproline. Lysine residues at the third position of the tripeptide repeating unit (G-X-Y) are 5-hydroxylated in some or all of the chains. Post-translationally, O-glycosylated on hydroxylated lysine residues. The O-linked glycan consists of a Glc-Gal disaccharide. As to expression, forms the fibrils of tendon, ligaments and bones. In bones the fibrils are mineralized with calcium hydroxyapatite.

It is found in the secreted. The protein resides in the extracellular space. The protein localises to the extracellular matrix. Type I collagen is a member of group I collagen (fibrillar forming collagen). The chain is Collagen alpha-1(I) chain from Mus musculus (Mouse).